A 170-amino-acid chain; its full sequence is uncharacterized protein (170 aa).

This is an uncharacterized protein from Saccharomyces cerevisiae (strain ATCC 204508 / S288c) (Baker's yeast).